The following is a 260-amino-acid chain: MALRRPMVAGNWKMNGSAQLAQELFKKFATKLQDDSAEVVLCPPSIYLESVRQLLDENKEALNGCLVRMGAQNLSQHDFGAYTGEISGQMLKDSGCRYVIIGHSERRRMYGETSVIVAEKFAAAQKHGLTPILCVGESGPAREARRTFEVIAEELDVVIEKNGTMAFDNAIIAYEPLWAVGTGKSATPEQAQEVHAFIRKRLSEVSPFIGENIRILYGGSVTPSNAADLFAQPDVDGGLIGGVSLNATEFLSLCTIAMSA.

11–13 serves as a coordination point for substrate; it reads NWK. The active-site Electrophile is the H103. E175 serves as the catalytic Proton acceptor. Substrate contacts are provided by residues G181, S220, and 241-242; that span reads GG.

Belongs to the triosephosphate isomerase family. As to quaternary structure, homodimer.

The protein resides in the cytoplasm. It catalyses the reaction D-glyceraldehyde 3-phosphate = dihydroxyacetone phosphate. The protein operates within carbohydrate biosynthesis; gluconeogenesis. Its pathway is carbohydrate degradation; glycolysis; D-glyceraldehyde 3-phosphate from glycerone phosphate: step 1/1. In terms of biological role, involved in the gluconeogenesis. Catalyzes stereospecifically the conversion of dihydroxyacetone phosphate (DHAP) to D-glyceraldehyde-3-phosphate (G3P). The sequence is that of Triosephosphate isomerase from Shewanella halifaxensis (strain HAW-EB4).